The primary structure comprises 101 residues: Small ribosomal subunit protein bS21 (101 aa).

A compositionally biased stretch (basic and acidic residues) spans 36–52; that stretch reads YEKPSEKKAREKAEAVR. Residues 36–101 are disordered; it reads YEKPSEKKAR…GPGAGPRGPR (66 aa). A compositionally biased stretch (basic residues) spans 53–62; that stretch reads RARKLARKKL. Gly residues predominate over residues 83-101; that stretch reads PGAGGPGAGGPGAGPRGPR.

Belongs to the bacterial ribosomal protein bS21 family.

The protein is Small ribosomal subunit protein bS21 of Rhodopseudomonas palustris (strain HaA2).